The sequence spans 1050 residues: Elongation factor 3 (1050 aa).

Residues Val43 and His45 each contribute to the ADP site. The HEAT 1 repeat unit spans residues 46 to 83; that stretch reads DVPVEFFEDLKKQIQSKDAKVSLAALDAYKHIASTNGL. Position 86 (Ser86) interacts with ADP. HEAT repeat units follow at residues 89 to 126, 127 to 165, 169 to 206, 208 to 244, 245 to 282, and 288 to 326; these read PYVV…AITP, TAVK…TAKA, LRMP…TIDN, DIEK…EVTM, ATLS…LVED, and PFMD…VGAV. Residues Thr395, His399, and Glu400 each coordinate ADP. 2 ABC transporter domains span residues 429–646 and 672–998; these read DEGE…YYEL and VKVS…KKDD. Residues Asn708, Glu927, Asn930, and His956 each contribute to the ADP site. Residues 980–1050 form a disordered region; the sequence is GHNWVQGQGS…DAYVSSDEEF (71 aa). The segment covering 1013-1037 has biased composition (basic residues); it reads AAKKKKKLSSAELRKKKKERMKKKK.

This sequence belongs to the ABC transporter superfamily. ABCF family. EF3 subfamily. Monomer.

Its subcellular location is the cytoplasm. It catalyses the reaction ATP + H2O = ADP + phosphate + H(+). The protein operates within protein biosynthesis; polypeptide chain elongation. Its function is as follows. Ribosome-dependent ATPase that functions in cytoplasmic translation elongation. Required for the ATP-dependent release of deacylated tRNA from the ribosomal E-site during protein biosynthesis. Stimulates the eEF1A-dependent binding of aminoacyl-tRNA to the ribosomal A-site, which has reduced affinity for tRNA as long as the E-site is occupied. Assists translation termination by stimulating the release of nascent protein from the ribosome by release factors. This Candida albicans (strain SC5314 / ATCC MYA-2876) (Yeast) protein is Elongation factor 3 (CEF3).